The chain runs to 549 residues: Mitochondrial hydroperoxide bicyclase CYP50918A1 (549 aa).

The tract at residues 1 to 75 (MPDAFDVSDD…PQGNRKPAVL (75 aa)) is disordered. Over residues 8–26 (SDDKQLVDQQLTRDSDSKP) the composition is skewed to basic and acidic residues. Residues 27 to 41 (AAKPASKQKPPSKVP) show a composition bias toward low complexity. C491 lines the heme pocket. The interval 528–549 (DTGDHGPPNGKFSVIKPRQPKH) is disordered.

It belongs to the cytochrome P450 family. Heme serves as cofactor.

Its subcellular location is the mitochondrion. The catalysed reaction is (13S)-hydroperoxy-(9Z,11E,15Z)-octadecatrienoate = plasmodiophorol A. It catalyses the reaction (13S)-hydroperoxy-(9Z,11E,15Z)-octadecatrienoate = plasmodiophorol B. It functions in the pathway lipid metabolism; oxylipin biosynthesis. Its function is as follows. Cytochrome P450 hydroperoxide bicyclase involved in the metabolism of oxylipins natural products such as egregiachlorides, hybridalactone, ecklonialactones and related bicyclic oxylipins. Isomerizes the hydroperoxides into epoxyalcohols via epoxyallylic radical. Can use alpha-linolenic 13-hydroperoxide ((9Z,11E,13S,15Z)-13-hydroperoxy-9,11,15-octadecatrienoic, 13-HPOT) as preferred substrate to produce the heterobicyclic oxylipins plasmodiophorol A (6-oxabicyclo[3.1.0]hexane) and plasmodiophorol B (2-oxabicyclo[2.2.1]heptane) at the ratio 12:1 and a minor product plasmodiophorol C (cyclopentanediol) formed through the hydrolysis of plasmodiophorols A and B and, to a lower extent, active with linoleic acid 13-hydroperoxide ((9Z,11E,13S)-13-hydroperoxy-9,11-octadecadienoic, 13-HPOD), linoleic acid 9-hydroperoxide ((9S,10E,12Z)-9-hydroperoxy-10,12-octadecadienoic, 9-HPOD) and alpha-linolenic 9-hydroperoxide ((9S,10E,12Z,15Z)-9-hydroperoxy-10,12,15-octadecatrienoic, 9-HPOT). The sequence is that of Mitochondrial hydroperoxide bicyclase CYP50918A1 from Plasmodiophora brassicae (Clubroot disease agent).